Here is a 296-residue protein sequence, read N- to C-terminus: Prostate androgen-regulated mucin-like protein 1 homolog (296 aa).

An N-terminal signal peptide occupies residues 1–20; the sequence is MVCKVLIALCIFTAGLRVQG. The Extracellular portion of the chain corresponds to 21 to 244; sequence SPTVPLPVSL…EVENALSSGS (224 aa). N-linked (GlcNAc...) asparagine glycans are attached at residues Asn-61 and Asn-95. The segment at 72–220 is disordered; that stretch reads LTSQLPTDHR…SPQDTEPGKV (149 aa). Over residues 78 to 95 the composition is skewed to basic and acidic residues; the sequence is TDHREEAVTSPPLKRDVN. Polar residues predominate over residues 96-110; sequence STDSSPAGFPSTSSD. The segment covering 139 to 167 has biased composition (low complexity); it reads LLSSQAPTSATTSPATSLSESLSASVTSS. The span at 168–177 shows a compositional bias: polar residues; the sequence is HNSTVANIQP. Residue Asn-169 is glycosylated (N-linked (GlcNAc...) asparagine). The span at 206–217 shows a compositional bias: basic and acidic residues; that stretch reads VPKEKSPQDTEP. Residues 245-265 traverse the membrane as a helical segment; it reads IAAITVTVIAVVLLVFGGAAY. At 266 to 296 the chain is on the cytoplasmic side; it reads LKIRHSSYGRLLDDHDYGSWGNYNNPLYDDS. Ser-284 carries the phosphoserine modification.

The protein belongs to the PARM family. Highly N-glycosylated and O-glycosylated.

The protein resides in the cell membrane. The protein localises to the golgi apparatus membrane. It localises to the endosome membrane. In terms of biological role, may regulate TLP1 expression and telomerase activity, thus enabling certain prostatic cells to resist apoptosis. In Mus musculus (Mouse), this protein is Prostate androgen-regulated mucin-like protein 1 homolog (Parm1).